The following is a 351-amino-acid chain: uncharacterized protein (351 aa).

Positions 1–61 (MNDKRKPSFQ…RDKQEVKETR (61 aa)) are disordered. Composition is skewed to basic and acidic residues over residues 16–38 (FQER…HFND) and 44–61 (RNEK…KETR).

The protein belongs to the class IV-like SAM-binding methyltransferase superfamily. RNA methyltransferase TrmH family.

This is an uncharacterized protein from Haemophilus influenzae (strain ATCC 51907 / DSM 11121 / KW20 / Rd).